Consider the following 246-residue polypeptide: Caffeoyl-CoA O-methyltransferase 1 (246 aa).

Lys-21 is a substrate binding site. Residues Thr-63, Glu-85, 87 to 88 (GV), Ser-93, Asp-111, and Ala-140 contribute to the S-adenosyl-L-methionine site. Asp-162 contacts substrate. Asp-162 contacts a divalent metal cation. Residue Asp-164 participates in S-adenosyl-L-methionine binding. A divalent metal cation-binding residues include Asp-188 and Asn-189. A substrate-binding site is contributed by Asn-193.

Belongs to the class I-like SAM-binding methyltransferase superfamily. Cation-dependent O-methyltransferase family. CCoAMT subfamily. A divalent metal cation is required as a cofactor.

The catalysed reaction is (E)-caffeoyl-CoA + S-adenosyl-L-methionine = (E)-feruloyl-CoA + S-adenosyl-L-homocysteine + H(+). Its pathway is aromatic compound metabolism; phenylpropanoid biosynthesis. In terms of biological role, methylates caffeoyl-CoA to feruloyl-CoA and 5-hydroxyferuloyl-CoA to sinapoyl-CoA. Plays a role in the synthesis of feruloylated polysaccharides. Involved in the reinforcement of the plant cell wall. Also involved in the responding to wounding or pathogen challenge by the increased formation of cell wall-bound ferulic acid polymers. The protein is Caffeoyl-CoA O-methyltransferase 1 (CCOMT) of Eucalyptus globulus (Tasmanian blue gum).